The sequence spans 1263 residues: DNA-directed RNA polymerase subunit beta (1263 aa).

The protein belongs to the RNA polymerase beta chain family. The RNAP catalytic core consists of 2 alpha, 1 beta, 1 beta' and 1 omega subunit. When a sigma factor is associated with the core the holoenzyme is formed, which can initiate transcription.

It catalyses the reaction RNA(n) + a ribonucleoside 5'-triphosphate = RNA(n+1) + diphosphate. Its function is as follows. DNA-dependent RNA polymerase catalyzes the transcription of DNA into RNA using the four ribonucleoside triphosphates as substrates. The chain is DNA-directed RNA polymerase subunit beta from Thermotoga sp. (strain RQ2).